Reading from the N-terminus, the 289-residue chain is uncharacterized protein (289 aa).

Residues 1-58 (MDEKDWILLKILHEEQSVTKTAERLFTSQPSITYRLKKIEEIFGIELFTKRHKGITFT) enclose the HTH lysR-type domain. Positions 18 to 37 (VTKTAERLFTSQPSITYRLK) form a DNA-binding region, H-T-H motif.

The protein belongs to the LysR transcriptional regulatory family.

This is an uncharacterized protein from Bacillus subtilis (strain 168).